A 116-amino-acid chain; its full sequence is Large ribosomal subunit protein bL20 (116 aa).

Belongs to the bacterial ribosomal protein bL20 family.

Binds directly to 23S ribosomal RNA and is necessary for the in vitro assembly process of the 50S ribosomal subunit. It is not involved in the protein synthesizing functions of that subunit. The protein is Large ribosomal subunit protein bL20 of Desulfosudis oleivorans (strain DSM 6200 / JCM 39069 / Hxd3) (Desulfococcus oleovorans).